A 373-amino-acid polypeptide reads, in one-letter code: 3-dehydroquinate synthase (373 aa).

Residues 74 to 79 (DAEAGK), 108 to 112 (GAATD), 132 to 133 (TT), K145, K154, and 172 to 175 (TLET) contribute to the NAD(+) site. Positions 187, 250, and 266 each coordinate Zn(2+).

It belongs to the sugar phosphate cyclases superfamily. Dehydroquinate synthase family. The cofactor is Co(2+). Requires Zn(2+) as cofactor. It depends on NAD(+) as a cofactor.

It is found in the cytoplasm. It catalyses the reaction 7-phospho-2-dehydro-3-deoxy-D-arabino-heptonate = 3-dehydroquinate + phosphate. It participates in metabolic intermediate biosynthesis; chorismate biosynthesis; chorismate from D-erythrose 4-phosphate and phosphoenolpyruvate: step 2/7. Catalyzes the conversion of 3-deoxy-D-arabino-heptulosonate 7-phosphate (DAHP) to dehydroquinate (DHQ). The protein is 3-dehydroquinate synthase of Nocardia farcinica (strain IFM 10152).